We begin with the raw amino-acid sequence, 208 residues long: Outer-membrane lipoprotein carrier protein (208 aa).

The signal sequence occupies residues 1–21; sequence MPAFRYLIVLPLLCWGFASQA.

The protein belongs to the LolA family. Monomer.

Its subcellular location is the periplasm. Participates in the translocation of lipoproteins from the inner membrane to the outer membrane. Only forms a complex with a lipoprotein if the residue after the N-terminal Cys is not an aspartate (The Asp acts as a targeting signal to indicate that the lipoprotein should stay in the inner membrane). The polypeptide is Outer-membrane lipoprotein carrier protein (Methylococcus capsulatus (strain ATCC 33009 / NCIMB 11132 / Bath)).